The primary structure comprises 143 residues: Putative pre-16S rRNA nuclease (143 aa).

It belongs to the YqgF nuclease family.

Its subcellular location is the cytoplasm. Its function is as follows. Could be a nuclease involved in processing of the 5'-end of pre-16S rRNA. This Leuconostoc citreum (strain KM20) protein is Putative pre-16S rRNA nuclease.